The primary structure comprises 154 residues: Protein X (154 aa).

The interval 68-117 (PCALRFTFARRMETTVNAHQVLPKVLHKRTLGLSAMSTTDLEAYFKDCVF) is mitochondrial targeting sequence.

This sequence belongs to the orthohepadnavirus protein X family. May form homodimer. May interact with host CEBPA, CFLAR, CREB1, DDB1, E4F1, HBXIP, HSPD1/HSP60, NFKBIA, POLR2E and SMAD4. Interacts with host SMC5-SMC6 complex and induces its degradation. Interacts with host TRPC4AP; leading to prevent ubiquitination of TRPC4AP. Interacts with host PLSCR1; this interaction promotes ubiquitination and degradation of HBx and impairs HBx-mediated cell proliferation. Post-translationally, a fraction may be phosphorylated in insect cells and HepG2 cells, a human hepatoblastoma cell line. Phosphorylated in vitro by host protein kinase C or mitogen-activated protein kinase. N-acetylated in insect cells.

The protein resides in the host cytoplasm. It localises to the host nucleus. The protein localises to the host mitochondrion. In terms of biological role, multifunctional protein that plays a role in silencing host antiviral defenses and promoting viral transcription. Does not seem to be essential for HBV infection. May be directly involved in development of cirrhosis and liver cancer (hepatocellular carcinoma). Most of cytosolic activities involve modulation of cytosolic calcium. The effect on apoptosis is controversial depending on the cell types in which the studies have been conducted. May induce apoptosis by localizing in mitochondria and causing loss of mitochondrial membrane potential. May also modulate apoptosis by binding host CFLAR, a key regulator of the death-inducing signaling complex (DISC). Promotes viral transcription by using the host E3 ubiquitin ligase DDB1 to target the SMC5-SMC6 complex to proteasomal degradation. This host complex would otherwise bind to viral episomal DNA, and prevents its transcription. Moderately stimulates transcription of many different viral and cellular transcription elements. Promoters and enhancers stimulated by HBx contain DNA binding sites for NF-kappa-B, AP-1, AP-2, c-EBP, ATF/CREB, or the calcium-activated factor NF-AT. The chain is Protein X from Hepatitis B virus genotype C subtype ayw (isolate China/Tibet127/2002) (HBV-C).